A 425-amino-acid polypeptide reads, in one-letter code: Serine--tRNA ligase (425 aa).

Residue 233–235 (TAE) participates in L-serine binding. 264–266 (RRE) serves as a coordination point for ATP. Position 287 (glutamate 287) interacts with L-serine. 351–354 (EISS) contributes to the ATP binding site. Serine 385 is an L-serine binding site.

The protein belongs to the class-II aminoacyl-tRNA synthetase family. Type-1 seryl-tRNA synthetase subfamily. Homodimer. The tRNA molecule binds across the dimer.

It localises to the cytoplasm. It catalyses the reaction tRNA(Ser) + L-serine + ATP = L-seryl-tRNA(Ser) + AMP + diphosphate + H(+). The catalysed reaction is tRNA(Sec) + L-serine + ATP = L-seryl-tRNA(Sec) + AMP + diphosphate + H(+). It functions in the pathway aminoacyl-tRNA biosynthesis; selenocysteinyl-tRNA(Sec) biosynthesis; L-seryl-tRNA(Sec) from L-serine and tRNA(Sec): step 1/1. Catalyzes the attachment of serine to tRNA(Ser). Is also able to aminoacylate tRNA(Sec) with serine, to form the misacylated tRNA L-seryl-tRNA(Sec), which will be further converted into selenocysteinyl-tRNA(Sec). The sequence is that of Serine--tRNA ligase from Synechococcus sp. (strain CC9605).